The following is a 978-amino-acid chain: Copper-transporting ATPase HMA4 (978 aa).

The span at 1–11 (MEQNGENHLKD) shows a compositional bias: basic and acidic residues. Residues 1–35 (MEQNGENHLKDPLLQADGGGSGASPAGASPRKERK) are disordered. 3 HMA domains span residues 37–103 (RKVM…FEVD), 111–177 (AVCR…FGAD), and 186–252 (NKVH…QPPK). Cu(+) contacts are provided by Cys48, Cys51, Cys122, and Cys125. 8 helical membrane-spanning segments follow: residues 280 to 300 (FLWS…LPMI), 315 to 335 (MTIG…IIGW), 352 to 372 (MDVL…YIVL), 385 to 405 (FFET…LEVV), 545 to 565 (FFVP…FVAG), 584 to 604 (LALQ…LGLA), 907 to 927 (VWAL…LFPF), and 935 to 955 (WLAG…SLLL).

Belongs to the cation transport ATPase (P-type) (TC 3.A.3) family. Type IB subfamily. As to expression, highly expressed in roots. Expressed in vascular tissues of the stele, mainly in pericycle cells.

It localises to the vacuole membrane. It carries out the reaction Cu(+)(in) + ATP + H2O = Cu(+)(out) + ADP + phosphate + H(+). Functionally, copper (Cu) transporter that mediates Cu transport in root vacuoles. Involved in Cu detoxification by sequestrating Cu into root vacuoles and limiting translocation of Cu from the roots to the shoots, and accumulation in grains. The sequence is that of Copper-transporting ATPase HMA4 from Oryza sativa subsp. japonica (Rice).